The following is a 295-amino-acid chain: GTP-binding protein GEM (295 aa).

A disordered region spans residues 39–64 (CNLRNRHSTAPEEHCRRSWSSDSTDS). GTP-binding positions include 81-88 (GEQGVGKS) and 190-193 (NKSD). Residues 265–284 (ARRFWGKIVAKNNKNMAFKL) are calmodulin-binding.

Belongs to the small GTPase superfamily. RGK family. In terms of assembly, interacts with calmodulin in a Ca(2+)-dependent manner. Calmodulin binding significantly decreases GTP binding. Binds ROCK1. Post-translationally, phosphorylated on tyrosine residues.

The protein resides in the cell membrane. Functionally, could be a regulatory protein, possibly participating in receptor-mediated signal transduction at the plasma membrane. Has guanine nucleotide-binding activity but undetectable intrinsic GTPase activity. The sequence is that of GTP-binding protein GEM (Gem) from Mus musculus (Mouse).